Consider the following 224-residue polypeptide: Homeobox protein Hox-B6 (224 aa).

An Antp-type hexapeptide motif is present at residues 127 to 132 (VYPWMQ). Residues 146–205 (GRRGRQTYTRYQTLELEKEFHYNRYLTRRRRIEIAHALCLTERQIKIWFQNRRMKWKKES) constitute a DNA-binding region (homeobox). The residue at position 214 (Ser-214) is a Phosphoserine.

It belongs to the Antp homeobox family.

The protein resides in the nucleus. In terms of biological role, sequence-specific transcription factor which is part of a developmental regulatory system that provides cells with specific positional identities on the anterior-posterior axis. This Mus musculus (Mouse) protein is Homeobox protein Hox-B6 (Hoxb6).